The following is a 145-amino-acid chain: Ribonuclease H (145 aa).

The RNase H type-1 domain occupies 2-143 (SKKEVIIYTD…ADSLARKAII (142 aa)). Positions 11, 49, 71, and 135 each coordinate Mg(2+).

The protein belongs to the RNase H family. As to quaternary structure, monomer. Mg(2+) is required as a cofactor.

The protein localises to the cytoplasm. The enzyme catalyses Endonucleolytic cleavage to 5'-phosphomonoester.. Functionally, endonuclease that specifically degrades the RNA of RNA-DNA hybrids. The sequence is that of Ribonuclease H from Wolbachia pipientis wMel.